Consider the following 683-residue polypeptide: Solute carrier organic anion transporter family member 2B1 (683 aa).

A disordered region spans residues 1 to 30; the sequence is MPDRSTKTTMGTEDMHERKVSVEPQDSHQD. Residues 1–41 are Cytoplasmic-facing; the sequence is MPDRSTKTTMGTEDMHERKVSVEPQDSHQDAQPRGMFHNIK. Residues 13–30 are compositionally biased toward basic and acidic residues; sequence EDMHERKVSVEPQDSHQD. A Phosphoserine modification is found at S21. Residues 42–61 traverse the membrane as a helical segment; sequence FFVLCHSLLQLTQLMISGYL. Residues 62–80 are Extracellular-facing; it reads KSSISTVEKRFGLSSQISG. The helical transmembrane segment at 81–101 threads the bilayer; sequence LLAAFNEVGNVSLILFVSYFG. The Cytoplasmic segment spans residues 102 to 107; the sequence is SRVHRP. The helical transmembrane segment at 108-132 threads the bilayer; the sequence is RMIGYGALLVATAGLLMALPHFISE. Residues 133 to 177 lie on the Extracellular side of the membrane; sequence PYRYDHSSSDNRSLDFEASLCLPTTMAPASALSNGSCSSHTETKH. 2 N-linked (GlcNAc...) asparagine glycosylation sites follow: N143 and N166. A helical transmembrane segment spans residues 178–207; sequence LTMVGIMFAAQTLLGIGGVPIQPFGISYID. The Cytoplasmic segment spans residues 208–226; the sequence is DFAHHSNSPLYIGILFGIT. A helical membrane pass occupies residues 227-247; it reads TMGPGLAYGLGSLMLRLYVDI. Residues 248 to 265 lie on the Extracellular side of the membrane; sequence DRMPEGGINLTPKDPRWV. Residues 266-290 form a helical membrane-spanning segment; sequence GAWWLGFLISSGLVVLASSPYFFFP. At 291-355 the chain is on the cytoplasmic side; that stretch reads REMPKEKHEF…VKVFPRVLLR (65 aa). S312 and S315 each carry phosphoserine. Residues 356 to 377 traverse the membrane as a helical segment; that stretch reads NLRHPIFLLVVLSQVCTSSMVA. Over 378 to 397 the chain is Extracellular; that stretch reads GMATFLPKFLERQFSITASF. The helical transmembrane segment at 398 to 421 threads the bilayer; it reads ANMLLGCLTIPLVIVGIMMGGVLV. Residues 422–425 lie on the Cytoplasmic side of the membrane; that stretch reads KRLH. The helical transmembrane segment at 426-449 threads the bilayer; it reads LSPVQCSALCLLGSLLCLLFSVPL. At 450-553 the chain is on the extracellular side; the sequence is FFIGCSTHQI…SACSRLVLPF (104 aa). Residues 472–532 form the Kazal-like domain; that stretch reads PSLFPGCSEP…VFYTNCSCVA (61 aa). Disulfide bonds link C478/C509, C484/C505, and C493/C530. Residues N527 and N534 are each glycosylated (N-linked (GlcNAc...) asparagine). The helical transmembrane segment at 554–576 threads the bilayer; sequence IVLFSLGAGLASITHTPSFMLIL. Residues 577-585 are Cytoplasmic-facing; that stretch reads RGVKKEDKT. The helical transmembrane segment at 586–611 threads the bilayer; that stretch reads LAVGMQFMLLRVLAWMPSPVIHGSAI. Over 612–644 the chain is Extracellular; it reads DTTCVHWALTCGRRAVCRYYDHDLLRNRFIGLQ. A helical transmembrane segment spans residues 645–662; sequence FFFKSGSLVCFTLVLAIL. Residues 663 to 683 lie on the Cytoplasmic side of the membrane; the sequence is RQQSREASTRTTVKSSELQQL.

The protein belongs to the organo anion transporter (TC 2.A.60) family. In terms of tissue distribution, expressed in liver, kidney, small intestine mucosa, large intestine, brain, lung, spleen, stomach and heart.

Its subcellular location is the cell membrane. The protein resides in the basal cell membrane. The protein localises to the apical cell membrane. It catalyses the reaction dehydroepiandrosterone 3-sulfate(out) = dehydroepiandrosterone 3-sulfate(in). It carries out the reaction estrone 3-sulfate(out) = estrone 3-sulfate(in). The catalysed reaction is estrone 3-sulfate(out) + hydrogencarbonate(in) = estrone 3-sulfate(in) + hydrogencarbonate(out). The enzyme catalyses taurocholate(out) = taurocholate(in). It catalyses the reaction coproporphyrin III(out) = coproporphyrin III(in). It carries out the reaction substance P(out) = substance P(in). The catalysed reaction is pregnenolone sulfate(out) = pregnenolone sulfate(in). The enzyme catalyses prostaglandin E2(out) = prostaglandin E2(in). It catalyses the reaction prostaglandin D2(out) = prostaglandin D2(in). It carries out the reaction L-thyroxine(out) = L-thyroxine(in). In terms of biological role, mediates the Na(+)-independent transport of steroid sulfate conjugates such as estrone 3-sulfate (E1S), dehydroepiandrosterone sulfate (DHEA-S) and pregnenolone sulfate (PregS) and other specific organic anions. Responsible for the transport of E1S through the basal membrane of syncytiotrophoblast, highlighting a potential role in the placental absorption of fetal-derived sulfated steroids including DHEA-S. Also facilitates the uptake of sulfated steroids at the basal/sinusoidal membrane of hepatocytes, therefore accounting for the major part of organic anions clearance of liver. Mediates the intestinal uptake of sulfated steroids. Mediates the uptake of the neurosteroids DHEA-S and PregS into the endothelial cells of the blood-brain barrier as the first step to enter the brain. Also plays a role in the reuptake of neuropeptides such as substance P/TAC1 and vasoactive intestinal peptide/VIP released from retinal neurons. May act as a heme transporter that promotes cellular iron availability. Also transports heme by-product coproporphyrin III (CPIII), and may be involved in their hepatic disposition. Mediates the uptake of other substrates such as prostaglandins D2 (PGD2), E1 (PGE1) and E2 (PGE2), taurocholate, L-thyroxine, leukotriene C4 and thromboxane B2. May contribute to regulate the transport of organic compounds in testis across the blood-testis-barrier. Shows a pH-sensitive substrate specificity which may be ascribed to the protonation state of the binding site and leads to a stimulation of substrate transport in an acidic microenvironment. The exact transport mechanism has not been yet deciphered but most likely involves an anion exchange, coupling the cellular uptake of organic substrate with the efflux of an anionic compound. Hydrogencarbonate/HCO3(-) acts as a probable counteranion that exchanges for organic anions. Cytoplasmic glutamate may also act as counteranion in the placenta. An inwardly directed proton gradient has also been proposed as the driving force of E1S uptake with a (H(+):E1S) stoichiometry of (1:1). The chain is Solute carrier organic anion transporter family member 2B1 from Mus musculus (Mouse).